A 452-amino-acid chain; its full sequence is Protein MLF3 (452 aa).

Ser-8, Ser-11, Ser-14, Ser-56, Ser-74, and Ser-79 each carry phosphoserine. Residues 61-94 (SGSEVRTPSLRKNSNNVSSPLDNVIPTSRSASNS) form a disordered region. A compositionally biased stretch (polar residues) spans 64-81 (EVRTPSLRKNSNNVSSPL). The residue at position 121 (Thr-121) is a Phosphothreonine. Ser-145, Ser-156, and Ser-160 each carry phosphoserine. Position 169 is a phosphothreonine (Thr-169). Ser-171 carries the post-translational modification Phosphoserine. The span at 171–182 (SATLPSSESSPA) shows a compositional bias: polar residues. The tract at residues 171–220 (SATLPSSESSPASPDLKLSRSHSHSAATRPTLNNINNTGMTTTTSNGEPN) is disordered. Thr-173 is modified (phosphothreonine). Ser-183 and Ser-189 each carry phosphoserine. Residues 201–216 (TLNNINNTGMTTTTSN) are compositionally biased toward low complexity. Residue Tyr-227 is modified to Phosphotyrosine. A phosphoserine mark is found at Ser-228, Ser-257, and Ser-265. Disordered stretches follow at residues 290 to 321 (PATS…NRSS) and 348 to 402 (IESS…AIGK). Tyr-295 bears the Phosphotyrosine mark. A phosphoserine mark is found at Ser-297, Ser-320, and Ser-353. Low complexity predominate over residues 299-321 (QQSARQYSNNANNNAKSPKNRSS). Over residues 365 to 383 (PSFPLSSSLRSSANLASNP) the composition is skewed to low complexity. The segment covering 384 to 398 (ELATQTPLSTSSSYT) has biased composition (polar residues). Ser-439 carries the post-translational modification Phosphoserine.

To yeast VHS2.

The protein resides in the cytoplasm. The protein is Protein MLF3 (MLF3) of Saccharomyces cerevisiae (strain ATCC 204508 / S288c) (Baker's yeast).